Here is a 161-residue protein sequence, read N- to C-terminus: uncharacterized protein (161 aa).

Residues 1 to 16 (MPRAGRAPAEGGPAPG) show a composition bias toward low complexity. Disordered regions lie at residues 1-23 (MPRAGRAPAEGGPAPGTRSSRCL), 50-91 (GRPV…TQSA), and 140-161 (RGPACGSTAQWPPRGDPTWRIS).

This is an uncharacterized protein from Homo sapiens (Human).